The sequence spans 129 residues: Protachykinin-1 (129 aa).

Positions 1-19 (MKILVALAVFFLVSTQLFA) are cleaved as a signal peptide. Positions 20 to 56 (EEIGANDDLNYWSDWYDSDQIKEELPEPFEHLLQRIA) are excised as a propeptide. Methionine amide occurs at positions 68 and 107.

It belongs to the tachykinin family. In terms of processing, the substance P form is cleaved at Pro-59 by the prolyl endopeptidase FAP (seprase) activity (in vitro). Substance P is also cleaved and degraded by Angiotensin-converting enzyme (ACE) and neprilysin (MME).

The protein localises to the secreted. Its function is as follows. Tachykinins are active peptides which excite neurons, evoke behavioral responses, are potent vasodilators and secretagogues, and contract (directly or indirectly) many smooth muscles. The polypeptide is Protachykinin-1 (TAC1) (Homo sapiens (Human)).